The chain runs to 144 residues: Eukaryotic translation initiation factor 1A, X-chromosomal (144 aa).

Residues 1–15 (MPKNKGKGGKNRRRG) are compositionally biased toward basic residues. 2 disordered regions span residues 1-26 (MPKN…KREL) and 114-144 (KINE…IDDI). The span at 16 to 26 (KNENESEKREL) shows a compositional bias: basic and acidic residues. Residues 22 to 96 (EKRELVFKED…NKADVILKYN (75 aa)) enclose the S1-like domain. A compositionally biased stretch (acidic residues) spans 124–144 (GDDDEIQFDDIGDDDEDIDDI).

It belongs to the eIF-1A family. In terms of assembly, component of the 43S pre-initiation complex (43S PIC), which is composed of the 40S ribosomal subunit, EIF1, eIF1A (EIF1AX), eIF3 complex, EIF5 and eIF2-GTP-initiator tRNA complex (eIF2 ternary complex). Interacts with EIF5; this interaction contributes to the maintenance of EIF1 within the open 43S PIC. Interacts through its C-terminal domain (CTD) with the CTD of EIF5B; from the location of the start codon by the 43S complex until the formation of the 80S complex. (Microbial infection) Interacts with human respiratory syncytial virus (HRSV) nucleoprotein; this interaction recruits EIF1AX to the viral replication complex to facilitate viral genomic RNA synthesis and virus production.

The protein resides in the cytoplasm. Its function is as follows. Component of the 43S pre-initiation complex (43S PIC), which binds to the mRNA cap-proximal region, scans mRNA 5'-untranslated region, and locates the initiation codon. This protein enhances formation of the cap-proximal complex. Together with EIF1, facilitates scanning, start codon recognition, promotion of the assembly of 48S complex at the initiation codon (43S PIC becomes 48S PIC after the start codon is reached), and dissociation of aberrant complexes. After start codon location, together with EIF5B orients the initiator methionine-tRNA in a conformation that allows 60S ribosomal subunit joining to form the 80S initiation complex. Is released after 80S initiation complex formation, just after GTP hydrolysis by EIF5B, and before release of EIF5B. Its globular part is located in the A site of the 40S ribosomal subunit. Its interaction with EIF5 during scanning contribute to the maintenance of EIF1 within the open 43S PIC. In contrast to yeast orthologs, does not bind EIF1. In Homo sapiens (Human), this protein is Eukaryotic translation initiation factor 1A, X-chromosomal (EIF1AX).